The chain runs to 178 residues: Gamma-crystallin S (178 aa).

Ser-2 carries the post-translational modification N-acetylserine. The segment at 2–5 is N-terminal arm; that stretch reads SKTG. 2 consecutive Beta/gamma crystallin 'Greek key' domains span residues 6–44 and 45–87; these read GKIS…RVEG and GTWA…RAVH. A connecting peptide region spans residues 88–93; that stretch reads LSSGGQ. 2 Beta/gamma crystallin 'Greek key' domains span residues 94–134 and 135–177; these read AKIQ…KVVE and GTWI…RRIV.

The protein belongs to the beta/gamma-crystallin family. In terms of assembly, monomer.

Its function is as follows. Crystallins are the dominant structural components of the vertebrate eye lens. This chain is Gamma-crystallin S (Crygs), found in Mus musculus (Mouse).